The chain runs to 493 residues: Glutamate--tRNA ligase (493 aa).

A 'HIGH' region motif is present at residues 10-20 (PSPTGFVHIGS). Zn(2+)-binding residues include Cys-114, Cys-116, Cys-141, and Glu-143. The 'KMSKS' region motif lies at 258 to 262 (KLSKR). Lys-261 lines the ATP pocket.

It belongs to the class-I aminoacyl-tRNA synthetase family. Glutamate--tRNA ligase type 1 subfamily. As to quaternary structure, monomer. It depends on Zn(2+) as a cofactor.

The protein resides in the cytoplasm. The catalysed reaction is tRNA(Glu) + L-glutamate + ATP = L-glutamyl-tRNA(Glu) + AMP + diphosphate. Its function is as follows. Catalyzes the attachment of glutamate to tRNA(Glu) in a two-step reaction: glutamate is first activated by ATP to form Glu-AMP and then transferred to the acceptor end of tRNA(Glu). The protein is Glutamate--tRNA ligase of Alkaliphilus metalliredigens (strain QYMF).